We begin with the raw amino-acid sequence, 205 residues long: Large ribosomal subunit protein uL4 (205 aa).

The disordered stretch occupies residues 43-97 (GKRQGTSKVKNRSAVRGGGKKPWRQKGTGRARQGSIRAPQWRGGGTVFGPTPRSY). The span at 51–71 (VKNRSAVRGGGKKPWRQKGTG) shows a compositional bias: basic residues.

It belongs to the universal ribosomal protein uL4 family. In terms of assembly, part of the 50S ribosomal subunit.

In terms of biological role, one of the primary rRNA binding proteins, this protein initially binds near the 5'-end of the 23S rRNA. It is important during the early stages of 50S assembly. It makes multiple contacts with different domains of the 23S rRNA in the assembled 50S subunit and ribosome. Its function is as follows. Forms part of the polypeptide exit tunnel. This Lactobacillus acidophilus (strain ATCC 700396 / NCK56 / N2 / NCFM) protein is Large ribosomal subunit protein uL4.